Here is a 641-residue protein sequence, read N- to C-terminus: DEAD-box ATP-dependent RNA helicase 50 (641 aa).

3 disordered regions span residues 86–115 (SMPS…IGNF), 129–189 (RSAH…LNSV), and 197–216 (DDLD…WGNI). Over residues 150-159 (PSDESDEDGT) the composition is skewed to acidic residues. The Q motif motif lies at 240 to 268 (RSFKEIGCSDEILGALRSFGFPRPSHIQA). In terms of domain architecture, Helicase ATP-binding spans 271–452 (YRPVLEGKSC…VETFPDCELI (182 aa)). An ATP-binding site is contributed by 284-291 (DQSGSGKT). The DEAD box motif lies at 399 to 402 (DEVD). In terms of domain architecture, Helicase C-terminal spans 487–641 (NKKSALVKII…GHPLHDVPCV (155 aa)).

The protein belongs to the DEAD box helicase family.

It carries out the reaction ATP + H2O = ADP + phosphate + H(+). Probably involved in resistance to biotic and abiotic stresses. Confers tolerance to oxidative stress and mediates pathogenesis-related (PR) genes expression. Exhibits RNA-dependent ATPase and ATP-dependent RNA helicase activities in vitro. The protein is DEAD-box ATP-dependent RNA helicase 50 of Oryza sativa subsp. japonica (Rice).